The sequence spans 431 residues: 3-deoxy-D-manno-octulosonic acid transferase (431 aa).

Residues 5-27 (WLTSRLYDAFLVCAFFVSAPRIF) form a helical; Signal-anchor membrane-spanning segment. Glu-67 functions as the Proton acceptor in the catalytic mechanism. CMP-binding positions include 275–276 (PR), 315–317 (MGV), and 342–345 (NLLE).

This sequence belongs to the glycosyltransferase group 1 family. Glycosyltransferase 30 subfamily.

It is found in the cell inner membrane. It carries out the reaction lipid IVA (E. coli) + CMP-3-deoxy-beta-D-manno-octulosonate = alpha-Kdo-(2-&gt;6)-lipid IVA (E. coli) + CMP + H(+). It catalyses the reaction alpha-Kdo-(2-&gt;6)-lipid IVA (E. coli) + CMP-3-deoxy-beta-D-manno-octulosonate = alpha-Kdo-(2-&gt;4)-alpha-Kdo-(2-&gt;6)-lipid IVA (E. coli) + CMP + H(+). The catalysed reaction is alpha-Kdo-(2-&gt;4)-alpha-Kdo-(2-&gt;6)-lipid IVA (E. coli) + CMP-3-deoxy-beta-D-manno-octulosonate = alpha-Kdo-(2-&gt;8)-alpha-Kdo-(2-&gt;4)-alpha-Kdo-(2-&gt;6)-lipid IVA (E. coli) + CMP + H(+). It functions in the pathway bacterial outer membrane biogenesis; LPS core biosynthesis. Functionally, involved in lipopolysaccharide (LPS) biosynthesis. Catalyzes the transfer of three 3-deoxy-D-manno-octulosonate (Kdo) residues from CMP-Kdo to lipid IV(A), the tetraacyldisaccharide-1,4'-bisphosphate precursor of lipid A. Thus generates the genus-specific LPS epitope of Chlamydia, composed of the trisaccharide alpha-Kdo-(2-&gt;8)-alpha-Kdo-(2-&gt;4)-alpha-Kdo. The polypeptide is 3-deoxy-D-manno-octulosonic acid transferase (waaA) (Chlamydia trachomatis serovar D (strain ATCC VR-885 / DSM 19411 / UW-3/Cx)).